A 1001-amino-acid chain; its full sequence is E3 ubiquitin-protein ligase etc-1 (1001 aa).

The IQ domain occupies 28–57; sequence QEKAARKVQKFWRGHRVQHNQRLLFRAEFD. A coiled-coil region spans residues 66–115; sequence LEETIKMAQLLVNFYETNKDEERLVMTLSELVKLKTSDKEFEKRIRETQR. One can recognise an HECT domain in the interval 658-1001; sequence KVNDLKSMVR…INSGAGFELA (344 aa). Residue Cys969 is the Glycyl thioester intermediate of the active site.

In terms of assembly, interacts with ify-1 and cyb-1.

It catalyses the reaction S-ubiquitinyl-[E2 ubiquitin-conjugating enzyme]-L-cysteine + [acceptor protein]-L-lysine = [E2 ubiquitin-conjugating enzyme]-L-cysteine + N(6)-ubiquitinyl-[acceptor protein]-L-lysine.. It functions in the pathway protein modification; protein ubiquitination. Functionally, E3 ubiquitin-protein ligase that accepts ubiquitin from E2 ubiquitin-conjugating enzymes, such as ubc-18, in the form of a thioester and then directly transfers the ubiquitin to targeted substrates. Ubiquitinates ify-1 and cyb-1 targeting them for degradation in post-meiotic embryos. In Caenorhabditis elegans, this protein is E3 ubiquitin-protein ligase etc-1.